Here is a 155-residue protein sequence, read N- to C-terminus: Egg cell-secreted protein 1.5 (155 aa).

Residues 1–32 form the signal peptide; it reads MATKSTSKPLLLSFLMMSYLISTFHVITVAEG.

This sequence belongs to the plant egg cell-secreted peptide family. In terms of tissue distribution, restricted to female reproductive tissues, specifically accumulating in storage vesicles of the unfertilized egg cell.

The protein resides in the cytoplasmic vesicle. It localises to the secreted. Functionally, involved in the regulation of gamete interactions during the double fertilization and to prevent multiple-pollen tube attraction; mediates the redistribution of the gamete fusogen HAP2/GCS1 to the cell surface after secretion upon sperm arrival. The chain is Egg cell-secreted protein 1.5 (EC1.5) from Arabidopsis thaliana (Mouse-ear cress).